The sequence spans 359 residues: MQAATVLINRRALRHNLQRLRELAPASKLVAVVKANAYGHGLIETARTLPDADAFGVARLEEALRLRAGGITRPILLLEGFFEADDLPTISAEHLHTAVHNEEQLVALENAELKEPVTVWMKLDTGMHRLGVLPEQAEAFYQRLSQCKNVRQPVNIVSHFARADEPQSGATEKQLDIFNTFCEGKPGQRSIAASGGILLWPQSHFDWARPGIILYGVSPLEDGTTGADFGCQPVMSLTSSLIAVREHKAGEPVGYGGTWVSERDTRLGVVAMGYGDGYPRAAPSGTPVLVNGREVPIVGRVAMDMICVDLGPQAQDKAGDPVILWGEGLPVERIAEMTKVSAYELITRLTSRVAMKYVD.

Lys34 acts as the Proton acceptor; specific for D-alanine in catalysis. Lys34 carries the post-translational modification N6-(pyridoxal phosphate)lysine. Arg129 contacts substrate. The active-site Proton acceptor; specific for L-alanine is Tyr255. Position 303 (Met303) interacts with substrate.

This sequence belongs to the alanine racemase family. The cofactor is pyridoxal 5'-phosphate.

It catalyses the reaction L-alanine = D-alanine. The protein operates within amino-acid biosynthesis; D-alanine biosynthesis; D-alanine from L-alanine: step 1/1. It functions in the pathway cell wall biogenesis; peptidoglycan biosynthesis. In terms of biological role, catalyzes the interconversion of L-alanine and D-alanine. Provides the D-alanine required for cell wall biosynthesis. This chain is Alanine racemase, biosynthetic (alr), found in Escherichia coli O6:H1 (strain CFT073 / ATCC 700928 / UPEC).